Consider the following 177-residue polypeptide: MGTETATLGGGCFWCTEAAMEELAGVTDVTSGYAGGDTADPSYRDVCSGTTGHAEVVQVEYDTAELAYEDVLEVFFTVHDPTTVDREGPDVGSQYRSIVLPHDDQQHERATAFVDELAAADAFDGSIVTEIEPLETFYPAAEKHQNYFEKNPDAAYCTVNVAPKVSKVREQFGARTE.

Cysteine 12 is an active-site residue.

The protein belongs to the MsrA Met sulfoxide reductase family.

The catalysed reaction is L-methionyl-[protein] + [thioredoxin]-disulfide + H2O = L-methionyl-(S)-S-oxide-[protein] + [thioredoxin]-dithiol. It catalyses the reaction [thioredoxin]-disulfide + L-methionine + H2O = L-methionine (S)-S-oxide + [thioredoxin]-dithiol. In terms of biological role, has an important function as a repair enzyme for proteins that have been inactivated by oxidation. Catalyzes the reversible oxidation-reduction of methionine sulfoxide in proteins to methionine. This Halobacterium salinarum (strain ATCC 29341 / DSM 671 / R1) protein is Peptide methionine sulfoxide reductase MsrA.